The following is a 165-amino-acid chain: Glycine cleavage system H protein, mitochondrial (165 aa).

The transit peptide at 1–34 (MALRMWASSTANALKLSSSSRLHLSPTFSISRCF) directs the protein to the mitochondrion. Residues 56–138 (VATIGITDHA…YEDGWMIKIK (83 aa)) form the Lipoyl-binding domain. An N6-lipoyllysine modification is found at Lys-97.

Belongs to the GcvH family. In terms of assembly, the glycine cleavage system is composed of four proteins: P, T, L and H. It depends on (R)-lipoate as a cofactor.

Its subcellular location is the mitochondrion. Functionally, the glycine cleavage system catalyzes the degradation of glycine. The H protein shuttles the methylamine group of glycine from the P protein to the T protein. The chain is Glycine cleavage system H protein, mitochondrial (GDCSH) from Pisum sativum (Garden pea).